The chain runs to 99 residues: Nucleoid-associated protein UPA3_0088 (99 aa).

It belongs to the YbaB/EbfC family. As to quaternary structure, homodimer.

The protein localises to the cytoplasm. The protein resides in the nucleoid. In terms of biological role, binds to DNA and alters its conformation. May be involved in regulation of gene expression, nucleoid organization and DNA protection. The chain is Nucleoid-associated protein UPA3_0088 from Ureaplasma parvum serovar 3 (strain ATCC 27815 / 27 / NCTC 11736).